A 403-amino-acid polypeptide reads, in one-letter code: Imidazolonepropionase (403 aa).

His74 and His76 together coordinate Fe(3+). Positions 74 and 76 each coordinate Zn(2+). 3 residues coordinate 4-imidazolone-5-propanoate: Arg83, Tyr146, and His179. Position 146 (Tyr146) interacts with N-formimidoyl-L-glutamate. Fe(3+) is bound at residue His242. Residue His242 coordinates Zn(2+). Gln245 provides a ligand contact to 4-imidazolone-5-propanoate. Asp317 lines the Fe(3+) pocket. Residue Asp317 coordinates Zn(2+). N-formimidoyl-L-glutamate is bound by residues Asn319 and Gly321. Residue Thr322 coordinates 4-imidazolone-5-propanoate.

It belongs to the metallo-dependent hydrolases superfamily. HutI family. Zn(2+) is required as a cofactor. Fe(3+) serves as cofactor.

The protein resides in the cytoplasm. It carries out the reaction 4-imidazolone-5-propanoate + H2O = N-formimidoyl-L-glutamate. It participates in amino-acid degradation; L-histidine degradation into L-glutamate; N-formimidoyl-L-glutamate from L-histidine: step 3/3. In terms of biological role, catalyzes the hydrolytic cleavage of the carbon-nitrogen bond in imidazolone-5-propanoate to yield N-formimidoyl-L-glutamate. It is the third step in the universal histidine degradation pathway. The polypeptide is Imidazolonepropionase (Sphingopyxis alaskensis (strain DSM 13593 / LMG 18877 / RB2256) (Sphingomonas alaskensis)).